The primary structure comprises 598 residues: Probable translation initiation factor IF-2 (598 aa).

The tr-type G domain maps to Leu3–Lys225. The segment at Gly12 to Thr19 is G1. Gly12–Thr19 contributes to the GTP binding site. The G2 stretch occupies residues Gly37–His41. A G3 region spans residues Asp76–Gly79. Residues Asp76 to His80 and Asn130 to Asp133 each bind GTP. The tract at residues Asn130–Asp133 is G4. The segment at Ser200–Ile202 is G5.

The protein belongs to the TRAFAC class translation factor GTPase superfamily. Classic translation factor GTPase family. IF-2 subfamily.

Function in general translation initiation by promoting the binding of the formylmethionine-tRNA to ribosomes. Seems to function along with eIF-2. This Methanococcus vannielii (strain ATCC 35089 / DSM 1224 / JCM 13029 / OCM 148 / SB) protein is Probable translation initiation factor IF-2.